The sequence spans 309 residues: Ornithine carbamoyltransferase (309 aa).

Residues 56–59 (STRT), Gln-83, Arg-107, and 134–137 (HPCQ) contribute to the carbamoyl phosphate site. L-ornithine-binding positions include Asn-165, Asp-223, and 227–228 (SM). Carbamoyl phosphate contacts are provided by residues 263–264 (CL) and Arg-291.

The protein belongs to the aspartate/ornithine carbamoyltransferase superfamily. OTCase family.

The protein resides in the cytoplasm. The enzyme catalyses carbamoyl phosphate + L-ornithine = L-citrulline + phosphate + H(+). It functions in the pathway amino-acid biosynthesis; L-arginine biosynthesis; L-arginine from L-ornithine and carbamoyl phosphate: step 1/3. Reversibly catalyzes the transfer of the carbamoyl group from carbamoyl phosphate (CP) to the N(epsilon) atom of ornithine (ORN) to produce L-citrulline. This Burkholderia lata (strain ATCC 17760 / DSM 23089 / LMG 22485 / NCIMB 9086 / R18194 / 383) protein is Ornithine carbamoyltransferase.